The chain runs to 457 residues: Mannose-6-phosphate isomerase (457 aa).

Positions 108, 110, 135, and 292 each coordinate Zn(2+). The active site involves arginine 311.

Belongs to the mannose-6-phosphate isomerase type 1 family. Requires Zn(2+) as cofactor.

Its subcellular location is the cytoplasm. It catalyses the reaction D-mannose 6-phosphate = D-fructose 6-phosphate. The protein operates within nucleotide-sugar biosynthesis; GDP-alpha-D-mannose biosynthesis; alpha-D-mannose 1-phosphate from D-fructose 6-phosphate: step 1/2. Its function is as follows. Involved in the synthesis of the GDP-mannose and dolichol-phosphate-mannose required for a number of critical mannosyl transfer reactions. This chain is Mannose-6-phosphate isomerase (pmi1), found in Aspergillus fumigatus (strain ATCC MYA-4609 / CBS 101355 / FGSC A1100 / Af293) (Neosartorya fumigata).